The primary structure comprises 362 residues: Molybdenum import ATP-binding protein ModC (362 aa).

The ABC transporter domain occupies 2-236 (ASPIEVRLQM…LDLPLAMGSD (235 aa)). 34-41 (GPSGSGKT) is a binding site for ATP. Residues 297 to 362 (QSSILNRLPV…AQIKAVAVLA (66 aa)) form the Mop domain.

The protein belongs to the ABC transporter superfamily. Molybdate importer (TC 3.A.1.8) family. The complex is composed of two ATP-binding proteins (ModC), two transmembrane proteins (ModB) and a solute-binding protein (ModA).

The protein resides in the cell inner membrane. The enzyme catalyses molybdate(out) + ATP + H2O = molybdate(in) + ADP + phosphate + H(+). Its function is as follows. Part of the ABC transporter complex ModABC involved in molybdenum import. Responsible for energy coupling to the transport system. This is Molybdenum import ATP-binding protein ModC from Pseudomonas syringae pv. syringae (strain B728a).